Here is a 193-residue protein sequence, read N- to C-terminus: Biphenyl dioxygenase subunit beta (193 aa).

Belongs to the bacterial ring-hydroxylating dioxygenase beta subunit family. As to quaternary structure, heterohexamer consisting of 3 BphA1 subunits and 3 BphA2 subunits. A ferredoxin (BphA3) and a ferredoxin reductase (BphA4) must be present to obtain activity.

It catalyses the reaction biphenyl + NADH + O2 + H(+) = (2R,3S)-3-phenylcyclohexa-3,5-diene-1,2-diol + NAD(+). It functions in the pathway xenobiotic degradation; biphenyl degradation; 2-hydroxy-2,4-pentadienoate and benzoate from biphenyl: step 1/4. In terms of biological role, the beta subunit may be responsible for the substrate specificity of the enzyme. In Pseudomonas sp. (strain KKS102), this protein is Biphenyl dioxygenase subunit beta (bphA2).